A 354-amino-acid chain; its full sequence is Galactose-1-phosphate uridylyltransferase (354 aa).

The tract at residues 36–72 is disordered; the sequence is TVTTSEVRRDPLLGDSAPSRLAPQGRTYHPPADQCPL. Cys-70, Cys-73, and His-114 together coordinate Zn(2+). Position 154 (Asn-154) interacts with UDP-alpha-D-glucose. Position 165 (His-165) interacts with Zn(2+). The active-site Tele-UMP-histidine intermediate is His-167. The UDP-alpha-D-glucose site is built by Gln-169 and Gln-332.

Belongs to the galactose-1-phosphate uridylyltransferase type 1 family. Requires Zn(2+) as cofactor.

It carries out the reaction alpha-D-galactose 1-phosphate + UDP-alpha-D-glucose = alpha-D-glucose 1-phosphate + UDP-alpha-D-galactose. Its pathway is carbohydrate metabolism; galactose metabolism. This chain is Galactose-1-phosphate uridylyltransferase (galT), found in Streptomyces lividans.